A 196-amino-acid chain; its full sequence is CASP-like protein 2U1 (196 aa).

Residues 1–11 are Cytoplasmic-facing; it reads MAPMECVRRRN. The chain crosses the membrane as a helical span at residues 12-32; it reads VGELVLRCAATLVCMLSLMLL. Topologically, residues 33 to 58 are extracellular; that stretch reads VRDQQIAVQEVGVTSVTTQLRYSSST. A helical transmembrane segment spans residues 59–79; the sequence is GLVYLVYANGLVALYCFVVVL. The Cytoplasmic portion of the chain corresponds to 80 to 95; that stretch reads TSSFNGGSVMRRNKSG. A helical membrane pass occupies residues 96-116; it reads AWALFVLDQVLACILLSAASA. Residues 117-148 are Extracellular-facing; that stretch reads ASEIAFLVEKGAKKTIWDSKCIVYGHFCRMLE. The chain crosses the membrane as a helical span at residues 149–169; that stretch reads VSIATSFIAVIMLGSICVLSA. Residues 170–196 are Cytoplasmic-facing; sequence KQLFQQYTHYARIVNMVKLKSTPNSLL.

The protein belongs to the Casparian strip membrane proteins (CASP) family. In terms of assembly, homodimer and heterodimers.

The protein localises to the cell membrane. In Pteridium aquilinum subsp. aquilinum (Bracken fern), this protein is CASP-like protein 2U1.